Consider the following 137-residue polypeptide: Large-conductance mechanosensitive channel (137 aa).

Helical transmembrane passes span 15–35, 38–58, and 80–100; these read IDLA…NSIV, IFMP…MFIQ, and GNFI…FLFV.

The protein belongs to the MscL family. In terms of assembly, homopentamer.

It localises to the cell inner membrane. Its function is as follows. Channel that opens in response to stretch forces in the membrane lipid bilayer. May participate in the regulation of osmotic pressure changes within the cell. The sequence is that of Large-conductance mechanosensitive channel from Bartonella henselae (strain ATCC 49882 / DSM 28221 / CCUG 30454 / Houston 1) (Rochalimaea henselae).